The primary structure comprises 342 residues: Protein BMEI1586 (342 aa).

Serine 90 acts as the Proton acceptor in catalysis. Substrate contacts are provided by residues 91-92, aspartate 251, and 256-257; these read GS and GT.

It belongs to the proline racemase family. As to quaternary structure, homotetramer.

It carries out the reaction trans-4-hydroxy-L-proline = cis-4-hydroxy-D-proline. In vitro, catalyzes the epimerization of trans-4-hydroxy-L-proline (t4LHyp) to cis-4-hydroxy-D-proline (c4DHyp) and that of trans-3-hydroxy-L-proline (t3LHyp) to cis-3-hydroxy-D-proline (c3DHyp), albeit with very low efficiency. The physiological substrate may be different. Displays neither proline racemase activity nor t3LHyp dehydratase activity. The chain is Protein BMEI1586 from Brucella melitensis biotype 1 (strain ATCC 23456 / CCUG 17765 / NCTC 10094 / 16M).